The chain runs to 107 residues: ATP synthase peripheral stalk subunit F6, mitochondrial (107 aa).

A mitochondrion-targeting transit peptide spans Met1–Phe31. N6-acetyllysine is present on residues Lys40, Lys45, and Lys78. N6-acetyllysine; alternate is present on residues Lys93 and Lys98. Lys93 and Lys98 each carry N6-succinyllysine; alternate. At Lys104 the chain carries N6-acetyllysine.

This sequence belongs to the eukaryotic ATPase subunit F6 family. As to quaternary structure, component of the ATP synthase complex composed at least of ATP5F1A/subunit alpha, ATP5F1B/subunit beta, ATP5MC1/subunit c (homooctomer), MT-ATP6/subunit a, MT-ATP8/subunit 8, ATP5ME/subunit e, ATP5MF/subunit f, ATP5MG/subunit g, ATP5MK/subunit k, ATP5MJ/subunit j, ATP5F1C/subunit gamma, ATP5F1D/subunit delta, ATP5F1E/subunit epsilon, ATP5PF/subunit F6, ATP5PB/subunit b, ATP5PD/subunit d, ATP5PO/subunit OSCP. ATP synthase complex consists of a soluble F(1) head domain (subunits alpha(3) and beta(3)) - the catalytic core - and a membrane F(0) domain - the membrane proton channel (subunits c, a, 8, e, f, g, k and j). These two domains are linked by a central stalk (subunits gamma, delta, and epsilon) rotating inside the F1 region and a stationary peripheral stalk (subunits F6, b, d, and OSCP).

It localises to the mitochondrion. The protein resides in the mitochondrion inner membrane. In terms of biological role, subunit F6, of the mitochondrial membrane ATP synthase complex (F(1)F(0) ATP synthase or Complex V) that produces ATP from ADP in the presence of a proton gradient across the membrane which is generated by electron transport complexes of the respiratory chain. ATP synthase complex consist of a soluble F(1) head domain - the catalytic core - and a membrane F(1) domain - the membrane proton channel. These two domains are linked by a central stalk rotating inside the F(1) region and a stationary peripheral stalk. During catalysis, ATP synthesis in the catalytic domain of F(1) is coupled via a rotary mechanism of the central stalk subunits to proton translocation. In vivo, can only synthesize ATP although its ATP hydrolase activity can be activated artificially in vitro. Part of the complex F(0) domain. Part of the complex F(0) domain and the peripheric stalk, which acts as a stator to hold the catalytic alpha(3)beta(3) subcomplex and subunit a/ATP6 static relative to the rotary elements. In Pongo abelii (Sumatran orangutan), this protein is ATP synthase peripheral stalk subunit F6, mitochondrial.